An 84-amino-acid polypeptide reads, in one-letter code: MAHKKGASSTRNGRDSNAQRLGVKRFGGQVVGAGEIIVRQRGTHFHPGVNVGRGGDDTLFALSAGSVEFGVKGGRKVVNIVVPA.

Positions 1 to 21 are disordered; the sequence is MAHKKGASSTRNGRDSNAQRL. Residues 7–19 are compositionally biased toward polar residues; the sequence is ASSTRNGRDSNAQ.

Belongs to the bacterial ribosomal protein bL27 family.

The sequence is that of Large ribosomal subunit protein bL27 from Clavibacter sepedonicus (Clavibacter michiganensis subsp. sepedonicus).